The sequence spans 425 residues: Caveolae-associated protein 2 (425 aa).

Residues 1-42 (MGEDAAQAEKFQHPGSDMRQEKPSSPSPMPSSTPSPSLNLGN) are disordered. G2 is subject to N-acetylglycine. Positions 2-168 (GEDAAQAEKF…IFQEENEIPA (167 aa)) are interaction with CAVIN1. The segment covering 10 to 22 (KFQHPGSDMRQEK) has biased composition (basic and acidic residues). Phosphoserine occurs at positions 27, 35, 37, and 51. 2 coiled-coil regions span residues 61–82 (LLDKLVNMLDAVQENQHKMEQR) and 125–154 (TRAVKERMDRQCAQVKRLENNHAQLLRRNH). Positions 62–100 (LDKLVNMLDAVQENQHKMEQRQISLEGSVKGIQNDLTKL) are leucine-zipper. T196 and T199 each carry phosphothreonine. Disordered stretches follow at residues 199 to 234 (TVDLSSDDDLPHDEEALEDSAEEKVEESRAEKIKRS) and 271 to 425 (IKKS…HQTS). 3 positions are modified to phosphoserine: S203, S204, and S218. Over residues 203-219 (SSDDDLPHDEEALEDSA) the composition is skewed to acidic residues. Residues 210–268 (HDEEALEDSAEEKVEESRAEKIKRSSLKKVDSLKKAFSRQNIEKKMNKLGTKIVSVERR) adopt a coiled-coil conformation. Positions 220–234 (EEKVEESRAEKIKRS) are enriched in basic and acidic residues. Residues 274–287 (SLTSNHQKISSGKS) show a composition bias toward polar residues. Phosphoserine is present on residues S283, S284, S287, S288, and S293. Residues 303-317 (REGESHAENETKSED) show a composition bias toward basic and acidic residues. S332, S341, S366, and S370 each carry phosphoserine. Position 375 is a phosphothreonine (T375). Over residues 376–385 (IVEDEEEESV) the composition is skewed to acidic residues. At Y395 the chain carries Phosphotyrosine. S403 is modified (phosphoserine).

It belongs to the CAVIN family. Component of the CAVIN complex composed of CAVIN1, CAVIN2, CAVIN3 and CAVIN4. Binds to PRKCA in the presence of phosphatidylserine. Interacts with CAVIN4; this augments the transactivation of NPPA by CAVIN4. Interacts with CAVIN1. Interacts with CAV3. Phosphorylated on Ser residues. Highly expressed in heart and lung, and expressed at lower levels in brain, kidney, liver, pancreas, placenta, and skeletal muscle.

It is found in the cytoplasm. Its subcellular location is the cytosol. The protein resides in the membrane. It localises to the caveola. Plays an important role in caveolar biogenesis and morphology. Regulates caveolae morphology by inducing membrane curvature within caveolae. Plays a role in caveola formation in a tissue-specific manner. Required for the formation of caveolae in the lung and fat endothelia but not in the heart endothelia. Negatively regulates the size or stability of CAVIN complexes in the lung endothelial cells. May play a role in targeting PRKCA to caveolae. The protein is Caveolae-associated protein 2 of Homo sapiens (Human).